The following is a 93-amino-acid chain: Protein ea8.5 (93 aa).

This chain is Protein ea8.5 (ea8.5), found in Escherichia phage lambda (Bacteriophage lambda).